Reading from the N-terminus, the 182-residue chain is MTDLILKNAELQMKETIDAYVIHLRQIRTGKASGAILDKVMVNYYGSLMPLNQISQITTPEPNLIIIKPYDRNVITEAVGAIHKADLGLNPISDATLIRIPIAPLTEDVRKNLVKKVHKELEGYKIRIRNIRRDAIDEIKKVENISKDLISDNEDKIQQITDKFIKQLDDLTKEKERELMTI.

The protein belongs to the RRF family.

The protein resides in the cytoplasm. Its function is as follows. Responsible for the release of ribosomes from messenger RNA at the termination of protein biosynthesis. May increase the efficiency of translation by recycling ribosomes from one round of translation to another. The chain is Ribosome-recycling factor from Mycoplasma capricolum subsp. capricolum (strain California kid / ATCC 27343 / NCTC 10154).